A 280-amino-acid chain; its full sequence is MFELKNVTRRFGKKLAVDSVTLAIAQGQMVGIIGRSGAGKSTLLRMINRLQEPSSGSVHFAGVEVSGLRGQALRNWQRDCAMIFQQFNLVPRLDVLTNVMLGRLNHRSTLMSLLNIFTREERVHAIAALERLGIEQTALQAAGTLSGGQQQRVAIARALMQNPKMVLADEPIASLDPLNAKIVMDALRDINEREGITVITNLHTLDTARNYCERIVGMAGGRVVFDGKPSELTAEAVKEIYGTDKDGAGIDETMTSTSLESKRRAEDVSSGRVAKAAAVH.

The ABC transporter domain occupies 2-245; the sequence is FELKNVTRRF…AVKEIYGTDK (244 aa). 34-41 serves as a coordination point for ATP; that stretch reads GRSGAGKS. The interval 257 to 280 is disordered; the sequence is TSLESKRRAEDVSSGRVAKAAAVH. The span at 260–269 shows a compositional bias: basic and acidic residues; it reads ESKRRAEDVS.

Belongs to the ABC transporter superfamily. Phosphonates importer (TC 3.A.1.9.1) family. In terms of assembly, the complex is composed of two ATP-binding proteins (PhnC), two transmembrane proteins (PhnE) and a solute-binding protein (PhnD).

The protein resides in the cell inner membrane. The catalysed reaction is phosphonate(out) + ATP + H2O = phosphonate(in) + ADP + phosphate + H(+). Functionally, part of the ABC transporter complex PhnCDE involved in phosphonates import. Responsible for energy coupling to the transport system. The sequence is that of Phosphonates import ATP-binding protein PhnC from Rhizobium johnstonii (strain DSM 114642 / LMG 32736 / 3841) (Rhizobium leguminosarum bv. viciae).